Here is a 211-residue protein sequence, read N- to C-terminus: Holliday junction branch migration complex subunit RuvA (211 aa).

The interval 1–64 (MIGRLRGMLV…EDAQLLYGFA (64 aa)) is domain I. The domain II stretch occupies residues 65–143 (NKVERKLFRL…DWQAQQIHLV (79 aa)). The segment at 144-162 (SDDGVIPEQLSAELSQETT) is flexible linker. The domain III stretch occupies residues 163-211 (FVNDNKGDAINALLSLGYKQVQADKAVKSVYNRGMSSENIIRDALKSMI).

It belongs to the RuvA family. In terms of assembly, homotetramer. Forms an RuvA(8)-RuvB(12)-Holliday junction (HJ) complex. HJ DNA is sandwiched between 2 RuvA tetramers; dsDNA enters through RuvA and exits via RuvB. An RuvB hexamer assembles on each DNA strand where it exits the tetramer. Each RuvB hexamer is contacted by two RuvA subunits (via domain III) on 2 adjacent RuvB subunits; this complex drives branch migration. In the full resolvosome a probable DNA-RuvA(4)-RuvB(12)-RuvC(2) complex forms which resolves the HJ.

It is found in the cytoplasm. The RuvA-RuvB-RuvC complex processes Holliday junction (HJ) DNA during genetic recombination and DNA repair, while the RuvA-RuvB complex plays an important role in the rescue of blocked DNA replication forks via replication fork reversal (RFR). RuvA specifically binds to HJ cruciform DNA, conferring on it an open structure. The RuvB hexamer acts as an ATP-dependent pump, pulling dsDNA into and through the RuvAB complex. HJ branch migration allows RuvC to scan DNA until it finds its consensus sequence, where it cleaves and resolves the cruciform DNA. This Colwellia psychrerythraea (strain 34H / ATCC BAA-681) (Vibrio psychroerythus) protein is Holliday junction branch migration complex subunit RuvA.